The primary structure comprises 282 residues: Plant cysteine oxidase 3 (282 aa).

His-131, His-133, and His-202 together coordinate Fe cation.

The protein belongs to the cysteine dioxygenase family. Fe(2+) serves as cofactor.

The protein resides in the nucleus. Its subcellular location is the cytoplasm. The enzyme catalyses L-cysteine + O2 = 3-sulfino-L-alanine + H(+). Its function is as follows. Catalyzes the oxidation of N-terminal cysteine residues (N-Cys), thus preparing the protein for N-end rule pathway-mediated proteasomal degradation, upstream of the N-end rule enzymes ATE1, ATE2 and PRT6. Controls the preparation of the group VII ethylene response factor (ERF-VII) proteins for degradation via the 26S proteasome N-end rule pathway. Acts as an oxygen sensor that controls the stability of ERF-VII proteins, which are stabilized in flooding-induced hypoxia, and regulate transcriptional adaptation to these adverse conditions. The sequence is that of Plant cysteine oxidase 3 from Arabidopsis thaliana (Mouse-ear cress).